Here is a 427-residue protein sequence, read N- to C-terminus: UDP-N-acetylglucosamine 1-carboxyvinyltransferase (427 aa).

Position 22-23 (22-23 (KN)) interacts with phosphoenolpyruvate. A UDP-N-acetyl-alpha-D-glucosamine-binding site is contributed by arginine 99. Residue cysteine 123 is the Proton donor of the active site. Cysteine 123 carries the 2-(S-cysteinyl)pyruvic acid O-phosphothioketal modification. Residues 128–132 (RPIDL), aspartate 313, and isoleucine 335 contribute to the UDP-N-acetyl-alpha-D-glucosamine site.

The protein belongs to the EPSP synthase family. MurA subfamily.

It localises to the cytoplasm. The catalysed reaction is phosphoenolpyruvate + UDP-N-acetyl-alpha-D-glucosamine = UDP-N-acetyl-3-O-(1-carboxyvinyl)-alpha-D-glucosamine + phosphate. The protein operates within cell wall biogenesis; peptidoglycan biosynthesis. In terms of biological role, cell wall formation. Adds enolpyruvyl to UDP-N-acetylglucosamine. The polypeptide is UDP-N-acetylglucosamine 1-carboxyvinyltransferase (Sphingopyxis alaskensis (strain DSM 13593 / LMG 18877 / RB2256) (Sphingomonas alaskensis)).